The primary structure comprises 942 residues: Protein ZDS2 (942 aa).

Residues 1–28 form a disordered region; that stretch reads MVLMEDMQNKDGHNTVENSSGGTDSNNN. Residues 15-28 are compositionally biased toward polar residues; that stretch reads TVENSSGGTDSNNN. Position 50 is a phosphoserine (serine 50). Disordered regions lie at residues 91–142, 483–541, 617–654, 682–728, and 788–817; these read SRNS…DDSI, SQES…NSSN, VVSSSESQPSKPTAPAVVEKKVELPTDTQASTHKKNSL, VKKE…DIDT, and SRDTTAGLEEDIGAEREDNTSPTAPQISTL. A compositionally biased stretch (basic and acidic residues) spans 99–122; the sequence is SSKESLQESLHEENIIRSEQKEEQ. Positions 123–134 are enriched in acidic residues; it reads GSEDNDAYEEGD. Composition is skewed to low complexity over residues 483-497, 518-541, and 617-627; these read SQESSLLSTDSSNNS, SSSEKSNTNNSEANHGWSWLNSSN, and VVSSSESQPSK. A compositionally biased stretch (basic residues) spans 682 to 704; it reads VKKELKKKASHSSLSKFRKSPKK. Over residues 807–816 the composition is skewed to polar residues; that stretch reads TSPTAPQIST.

The protein to yeast ZDS1/NRC1/CES1. In terms of assembly, interacts with SKG6.

Acts as a negative regulator of polarized growth via an alternative mechanism to ZDS1. In heat-stressed cells appears to play a role in localizing BCY1 to the cytoplasm. Seems to interact with, and down-regulate, CDC42. Also acts as a suppressor of PKC1. May act as an integration point for distinct signaling pathways helping to maintain a balance among these different pathways. The chain is Protein ZDS2 (ZDS2) from Saccharomyces cerevisiae (strain ATCC 204508 / S288c) (Baker's yeast).